A 391-amino-acid chain; its full sequence is MNIHEYQGKDILRKFGVAVPKGIVAYSAEEAKQAAEQLFAEQDSPVVVIKAQIHAGGRGKAGGVKLAKSPEEAHEIASQMLGTTLVTHQTGPEGKEVRRLLVEEGMNIDREFYVGITLDRATSNNVLMISTEGGMEIEKVAEETPELLLKIQVDARFGLQGFQAREAAFFLGLEGEQFRNAVSFITALYNAYTSIDAALAEINPLVVTKEGRVLALDAKINFDSNALYRHKDFIELRDISEEDPFEVEASKSNLNYVRLDGNVGCMVNGAGLAMATMDMIQLAGGRPANFLDVGGGASPQTVEEGFKIILSDKNVKAILVNIFGGIVRCDRVAGGIIEAARKIGLNLPVIVRLEGTNADIAQKMLDESGLNLIAADGLKDAAQKVNQALSA.

Positions 9-248 (KDILRKFGVA…ISEEDPFEVE (240 aa)) constitute an ATP-grasp domain. ATP is bound by residues Lys50, 57–59 (GRG), Glu103, Met106, and Glu111. 2 residues coordinate Mg(2+): Asn203 and Asp217. Residues Asn268 and 325 to 327 (GIV) contribute to the substrate site.

Belongs to the succinate/malate CoA ligase beta subunit family. In terms of assembly, heterotetramer of two alpha and two beta subunits. Requires Mg(2+) as cofactor.

The enzyme catalyses succinate + ATP + CoA = succinyl-CoA + ADP + phosphate. It catalyses the reaction GTP + succinate + CoA = succinyl-CoA + GDP + phosphate. The protein operates within carbohydrate metabolism; tricarboxylic acid cycle; succinate from succinyl-CoA (ligase route): step 1/1. Succinyl-CoA synthetase functions in the citric acid cycle (TCA), coupling the hydrolysis of succinyl-CoA to the synthesis of either ATP or GTP and thus represents the only step of substrate-level phosphorylation in the TCA. The beta subunit provides nucleotide specificity of the enzyme and binds the substrate succinate, while the binding sites for coenzyme A and phosphate are found in the alpha subunit. This chain is Succinate--CoA ligase [ADP-forming] subunit beta, found in Chlorobium luteolum (strain DSM 273 / BCRC 81028 / 2530) (Pelodictyon luteolum).